Reading from the N-terminus, the 275-residue chain is Large ribosomal subunit protein uL2c (275 aa).

A disordered region spans residues 219–255 (TVRGSVMNPCDHPHGGGEGRAPIGRTRPLTPWGKPAL).

This sequence belongs to the universal ribosomal protein uL2 family. As to quaternary structure, part of the 50S ribosomal subunit.

Its subcellular location is the plastid. The protein localises to the chloroplast. The chain is Large ribosomal subunit protein uL2c (rpl2) from Trieres chinensis (Marine centric diatom).